Reading from the N-terminus, the 88-residue chain is Long neurotoxin LNTX-2 (88 aa).

Residues 1–21 (MKTLLLTLVVVTIVCLDFGYA) form the signal peptide. Intrachain disulfides connect Cys-24/Cys-42, Cys-35/Cys-63, Cys-67/Cys-78, and Cys-79/Cys-84.

It belongs to the three-finger toxin family. Long-chain subfamily. Type II alpha-neurotoxin sub-subfamily. In terms of tissue distribution, expressed by the venom gland.

Its subcellular location is the secreted. Its function is as follows. Binds with high affinity to muscular nicotinic acetylcholine receptors (nAChRs), whereas it binds with a low affinity to neuronal alpha-7/CHRNA7 nAChRs. This Demansia vestigiata (Lesser black whip snake) protein is Long neurotoxin LNTX-2.